We begin with the raw amino-acid sequence, 147 residues long: Formiminotransferase N-terminal subdomain-containing protein (147 aa).

The first 20 residues, Met-1–Ala-20, serve as a signal peptide directing secretion.

This sequence belongs to the formiminotransferase family. In terms of tissue distribution, widely expressed with highest levels in liver and skeletal muscle, and moderate levels in kidney, bone and pancreas.

This chain is Formiminotransferase N-terminal subdomain-containing protein (FTCDNL1), found in Homo sapiens (Human).